A 244-amino-acid polypeptide reads, in one-letter code: Flavin-dependent thymidylate synthase (244 aa).

The 206-residue stretch at 2–207 (VRVTLVNYTR…ELRPIIKWAK (206 aa)) folds into the ThyX domain. Residues serine 56, 80–82 (RHR), and glutamine 88 each bind FAD. DUMP is bound by residues 77–80 (QLVR), 88–92 (QQSQR), and arginine 146. Residues 80–90 (RHRIASYTQQS) carry the ThyX motif motif. FAD is bound by residues 162–164 (NLR) and histidine 168. A dUMP-binding site is contributed by arginine 173. Catalysis depends on arginine 173, which acts as the Involved in ionization of N3 of dUMP, leading to its activation.

This sequence belongs to the thymidylate synthase ThyX family. In terms of assembly, homotetramer. FAD is required as a cofactor.

The catalysed reaction is dUMP + (6R)-5,10-methylene-5,6,7,8-tetrahydrofolate + NADPH + H(+) = dTMP + (6S)-5,6,7,8-tetrahydrofolate + NADP(+). Its pathway is pyrimidine metabolism; dTTP biosynthesis. Catalyzes the reductive methylation of 2'-deoxyuridine-5'-monophosphate (dUMP) to 2'-deoxythymidine-5'-monophosphate (dTMP) while utilizing 5,10-methylenetetrahydrofolate (mTHF) as the methyl donor, and NADPH and FADH(2) as the reductant. This is Flavin-dependent thymidylate synthase from Pyrococcus abyssi (strain GE5 / Orsay).